The primary structure comprises 638 residues: Threonine--tRNA ligase (638 aa).

In terms of domain architecture, TGS spans 1-61 (MPIITLPDGT…DYDAEIKIIT (61 aa)). The interval 242–533 (DHRKIGKKMD…LIENYAGNFP (292 aa)) is catalytic. Residues Cys-333, His-384, and His-510 each coordinate Zn(2+).

It belongs to the class-II aminoacyl-tRNA synthetase family. In terms of assembly, homodimer. Zn(2+) serves as cofactor.

The protein resides in the cytoplasm. It carries out the reaction tRNA(Thr) + L-threonine + ATP = L-threonyl-tRNA(Thr) + AMP + diphosphate + H(+). Catalyzes the attachment of threonine to tRNA(Thr) in a two-step reaction: L-threonine is first activated by ATP to form Thr-AMP and then transferred to the acceptor end of tRNA(Thr). Also edits incorrectly charged L-seryl-tRNA(Thr). This Prochlorococcus marinus (strain MIT 9211) protein is Threonine--tRNA ligase.